Here is a 274-residue protein sequence, read N- to C-terminus: Phosphate import ATP-binding protein PstB (274 aa).

The ABC transporter domain maps to 28-269; it reads VTVRDLNFYY…PNDRRTQDYI (242 aa). 60–67 is a binding site for ATP; that stretch reads GPSGCGKS.

The protein belongs to the ABC transporter superfamily. Phosphate importer (TC 3.A.1.7) family. The complex is composed of two ATP-binding proteins (PstB), two transmembrane proteins (PstC and PstA) and a solute-binding protein (PstS).

The protein resides in the cell inner membrane. It carries out the reaction phosphate(out) + ATP + H2O = ADP + 2 phosphate(in) + H(+). Functionally, part of the ABC transporter complex PstSACB involved in phosphate import. Responsible for energy coupling to the transport system. The sequence is that of Phosphate import ATP-binding protein PstB from Rhodopseudomonas palustris (strain HaA2).